The following is a 194-amino-acid chain: Transcriptional repressor NrdR (194 aa).

The segment at 3-33 (CPFCGHADDRVLDTRVQKDGSIRRRRECLEC) is a zinc-finger region. One can recognise an ATP-cone domain in the interval 48 to 138 (PFIIKKDGRR…VYRTFKDVQE (91 aa)). The span at 168–179 (ESEKSTNHETDS) shows a compositional bias: basic and acidic residues. The disordered stretch occupies residues 168–194 (ESEKSTNHETDSKTPSPRTRPPGPLSN). A compositionally biased stretch (pro residues) spans 185 to 194 (RTRPPGPLSN).

The protein belongs to the NrdR family. Requires Zn(2+) as cofactor.

Its function is as follows. Negatively regulates transcription of bacterial ribonucleotide reductase nrd genes and operons by binding to NrdR-boxes. The protein is Transcriptional repressor NrdR of Bdellovibrio bacteriovorus (strain ATCC 15356 / DSM 50701 / NCIMB 9529 / HD100).